Here is a 1048-residue protein sequence, read N- to C-terminus: Self-sufficient cytochrome P450 monooxygenase CYP505E4 (1048 aa).

Cys-405 lines the heme pocket. Residues 499–640 (VSFFYGSNSG…DLEVWEETNL (142 aa)) form the Flavodoxin-like domain. FMN-binding positions include 505 to 509 (SNSGT) and 584 to 616 (VFGCGHQDWTKTFYRIPILIDNLMYKAGATRLA). The 229-residue stretch at 678–906 (RDLIEAKVTA…RPAKDAFHLP (229 aa)) folds into the FAD-binding FR-type domain.

It in the N-terminal section; belongs to the cytochrome P450 family. FAD serves as cofactor. It depends on FMN as a cofactor. The cofactor is heme.

It catalyses the reaction 2 oxidized [cytochrome P450] + NADPH = 2 reduced [cytochrome P450] + NADP(+) + H(+). The enzyme catalyses an organic molecule + reduced [NADPH--hemoprotein reductase] + O2 = an alcohol + oxidized [NADPH--hemoprotein reductase] + H2O + H(+). The catalysed reaction is dodecanoate + reduced [NADPH--hemoprotein reductase] + O2 = 5-hydroxydodecanoate + oxidized [NADPH--hemoprotein reductase] + H2O + H(+). It carries out the reaction tetradecanoate + reduced [NADPH--hemoprotein reductase] + O2 = 7-hydroxytetradecanoate + oxidized [NADPH--hemoprotein reductase] + H2O + H(+). It catalyses the reaction dodecan-1-ol + reduced [NADPH--hemoprotein reductase] + O2 = 1,5-dodecanediol + oxidized [NADPH--hemoprotein reductase] + H2O + H(+). The enzyme catalyses dodecan-1-ol + reduced [NADPH--hemoprotein reductase] + O2 = 1,4-dodecanediol + oxidized [NADPH--hemoprotein reductase] + H2O + H(+). The catalysed reaction is dodecan-1-ol + reduced [NADPH--hemoprotein reductase] + O2 = 1,6-dodecanediol + oxidized [NADPH--hemoprotein reductase] + H2O + H(+). Functionally, self-sufficient cytochrome P450 monooxygenase that catalyzes the regioselective in-chain hydroxylation of alkanes, fatty alcohols, and fatty acids at the omega-7 position. Performs hydroxylation of C10-C16 n-alkanes and C12 and C14 fatty alcohols; and thereby enables the one step biocatalytic synthesis of rare alcohols such as 5-dodecanol and 7-tetradecanol. Converts 1-dodecanol into 1,5-dodecanediol as major product with very little sub-terminally hydroxylated products with the 1,4-dodecanediol and 1,6-dodecanediol more abundant. Converts dodecanoic acid to 5-hydroxydodecanoic acid which can be further converted into delta-dodecalactone by lactonization of the 5-hydroxy acid at low pH. Also gives sub-terminal hydroxylation of dodecanoic acid with 9-hydroxydodecanoic acid being the second most abundant product. In Penicillium expansum (Blue mold rot fungus), this protein is Self-sufficient cytochrome P450 monooxygenase CYP505E4.